A 235-amino-acid polypeptide reads, in one-letter code: Glucosamine-6-phosphate deaminase (235 aa).

Aspartate 62 (proton acceptor; for enolization step) is an active-site residue. Asparagine 128 acts as the For ring-opening step in catalysis. The Proton acceptor; for ring-opening step role is filled by histidine 130. Glutamate 135 acts as the For ring-opening step in catalysis.

Belongs to the glucosamine/galactosamine-6-phosphate isomerase family. NagB subfamily.

The catalysed reaction is alpha-D-glucosamine 6-phosphate + H2O = beta-D-fructose 6-phosphate + NH4(+). The protein operates within amino-sugar metabolism; N-acetylneuraminate degradation; D-fructose 6-phosphate from N-acetylneuraminate: step 5/5. Functionally, catalyzes the reversible isomerization-deamination of glucosamine 6-phosphate (GlcN6P) to form fructose 6-phosphate (Fru6P) and ammonium ion. The chain is Glucosamine-6-phosphate deaminase from Streptococcus pneumoniae serotype 2 (strain D39 / NCTC 7466).